The primary structure comprises 279 residues: Phosphonates import ATP-binding protein PhnC 2 (279 aa).

The ABC transporter domain occupies 10 to 253 (LSLKGVSVRY…VARNLYAKQS (244 aa)). 43–50 (GASGAGKS) lines the ATP pocket. Residues 253–262 (SNASNTSAST) are compositionally biased toward low complexity. Residues 253–279 (SNASNTSASTDSPRTLQSSQTKELLPC) form a disordered region. Residues 263 to 279 (DSPRTLQSSQTKELLPC) show a composition bias toward polar residues.

The protein belongs to the ABC transporter superfamily. Phosphonates importer (TC 3.A.1.9.1) family. In terms of assembly, the complex is composed of two ATP-binding proteins (PhnC), two transmembrane proteins (PhnE) and a solute-binding protein (PhnD).

It is found in the cell inner membrane. It catalyses the reaction phosphonate(out) + ATP + H2O = phosphonate(in) + ADP + phosphate + H(+). In terms of biological role, part of the ABC transporter complex PhnCDE involved in phosphonates import. Responsible for energy coupling to the transport system. The protein is Phosphonates import ATP-binding protein PhnC 2 of Cupriavidus metallidurans (strain ATCC 43123 / DSM 2839 / NBRC 102507 / CH34) (Ralstonia metallidurans).